A 152-amino-acid chain; its full sequence is UPF0179 protein Mlab_1307 (152 aa).

Belongs to the UPF0179 family.

This Methanocorpusculum labreanum (strain ATCC 43576 / DSM 4855 / Z) protein is UPF0179 protein Mlab_1307.